The following is a 787-amino-acid chain: Aconitate hydratase, mitochondrial (787 aa).

A mitochondrion-targeting transit peptide spans 1 to 33 (MISTRLARAGALAPKSRLFLGTRAFATVGDSPL). Residues glutamine 104 and 197–199 (DSH) each bind substrate. Residues cysteine 390, cysteine 453, and cysteine 456 each coordinate [4Fe-4S] cluster. Positions 479 and 484 each coordinate substrate. Residues 529–559 (LQPPTGEGLPAKGYDPGRDTYQAPPADRSSV) form a disordered region. Substrate-binding positions include arginine 612 and 675–676 (SR).

The protein belongs to the aconitase/IPM isomerase family. Requires [4Fe-4S] cluster as cofactor.

It is found in the mitochondrion. The catalysed reaction is citrate = D-threo-isocitrate. It carries out the reaction (2R)-homocitrate = cis-homoaconitate + H2O. It participates in carbohydrate metabolism; tricarboxylic acid cycle; isocitrate from oxaloacetate: step 2/2. Its pathway is amino-acid biosynthesis; L-lysine biosynthesis via AAA pathway; L-alpha-aminoadipate from 2-oxoglutarate: step 2/5. Catalyzes the isomerization of citrate to isocitrate via cis-aconitate, a step in the citric acid cycle. Also catalyzes the reversible dehydration of (R)-homocitrate to cis-homoaconitate, a step in the alpha-aminoadipate pathway for lysine biosynthesis. The sequence is that of Aconitate hydratase, mitochondrial (acoA) from Aspergillus fumigatus (strain ATCC MYA-4609 / CBS 101355 / FGSC A1100 / Af293) (Neosartorya fumigata).